A 323-amino-acid polypeptide reads, in one-letter code: tRNA dimethylallyltransferase (323 aa).

ATP is bound at residue 12-19 (GPTAAGKT). Residue 14 to 19 (TAAGKT) participates in substrate binding. Interaction with substrate tRNA stretches follow at residues 37 to 40 (DSAL) and 161 to 165 (QRLTR).

This sequence belongs to the IPP transferase family. As to quaternary structure, monomer. It depends on Mg(2+) as a cofactor.

The catalysed reaction is adenosine(37) in tRNA + dimethylallyl diphosphate = N(6)-dimethylallyladenosine(37) in tRNA + diphosphate. Catalyzes the transfer of a dimethylallyl group onto the adenine at position 37 in tRNAs that read codons beginning with uridine, leading to the formation of N6-(dimethylallyl)adenosine (i(6)A). The protein is tRNA dimethylallyltransferase of Pseudomonas fluorescens (strain ATCC BAA-477 / NRRL B-23932 / Pf-5).